We begin with the raw amino-acid sequence, 234 residues long: ATP-dependent dethiobiotin synthetase BioD (234 aa).

Gly-14–Ile-19 provides a ligand contact to ATP. Thr-18 is a Mg(2+) binding site. Residue Lys-39 is part of the active site. Substrate is bound at residue Ser-43. Residues Asp-56, Glu-118–Gly-121, Asn-178–His-179, and Pro-208–Leu-210 contribute to the ATP site. Mg(2+) contacts are provided by Asp-56 and Glu-118.

This sequence belongs to the dethiobiotin synthetase family. In terms of assembly, homodimer. The cofactor is Mg(2+).

It is found in the cytoplasm. The enzyme catalyses (7R,8S)-7,8-diammoniononanoate + CO2 + ATP = (4R,5S)-dethiobiotin + ADP + phosphate + 3 H(+). Its pathway is cofactor biosynthesis; biotin biosynthesis; biotin from 7,8-diaminononanoate: step 1/2. Its function is as follows. Catalyzes a mechanistically unusual reaction, the ATP-dependent insertion of CO2 between the N7 and N8 nitrogen atoms of 7,8-diaminopelargonic acid (DAPA, also called 7,8-diammoniononanoate) to form a ureido ring. The sequence is that of ATP-dependent dethiobiotin synthetase BioD from Marinobacter nauticus (strain ATCC 700491 / DSM 11845 / VT8) (Marinobacter aquaeolei).